A 357-amino-acid polypeptide reads, in one-letter code: RNA-binding protein 4B (357 aa).

RRM domains are found at residues 2–72 and 78–148; these read VKLF…ASKN and TKLH…LSTS. A CCHC-type zinc finger spans residues 160–177; the sequence is SGCYRCGKEGHWSKECPV. The segment at 196-357 is interaction with TNPO3; the sequence is AVRTPYTMGY…YVDRTRYSAF (162 aa).

As to quaternary structure, interacts with TNPO3, which may mediate nuclear import of the protein. In terms of tissue distribution, expressed in the suprachiasmatic nucleus (SCN) (at protein level). Expressed in the suprachiasmatic nucleus (SCN).

The protein resides in the nucleus. It is found in the nucleolus. In terms of biological role, required for the translational activation of PER1 mRNA in response to circadian clock. Binds directly to the 3'-UTR of the PER1 mRNA. This is RNA-binding protein 4B (Rbm4b) from Mus musculus (Mouse).